The sequence spans 123 residues: MDERRTLRVSEAVREELSEIISFEMDDPRVLEAEVTEVMVSPDSRHASIKIACRGDEKKQNHAIAALEHAAGYLRRELASRLQLRHVPELHFERDKNPDVESRVDFLLRRARRTKGREENPSS.

Belongs to the RbfA family. Monomer. Binds 30S ribosomal subunits, but not 50S ribosomal subunits or 70S ribosomes.

It is found in the cytoplasm. One of several proteins that assist in the late maturation steps of the functional core of the 30S ribosomal subunit. Associates with free 30S ribosomal subunits (but not with 30S subunits that are part of 70S ribosomes or polysomes). Required for efficient processing of 16S rRNA. May interact with the 5'-terminal helix region of 16S rRNA. This is Ribosome-binding factor A from Solibacter usitatus (strain Ellin6076).